Here is a 152-residue protein sequence, read N- to C-terminus: Transcriptional regulator MraZ (152 aa).

2 consecutive SpoVT-AbrB domains span residues 5-52 (ASSL…PLAQ) and 81-124 (ATEY…DEAR).

The protein belongs to the MraZ family. As to quaternary structure, forms oligomers.

The protein resides in the cytoplasm. It localises to the nucleoid. This Pseudoalteromonas translucida (strain TAC 125) protein is Transcriptional regulator MraZ.